Consider the following 380-residue polypeptide: Cell division protein FtsZ 2 (380 aa).

GTP is bound by residues 47–51 (GAGNN), 134–136 (GTG), glutamate 165, arginine 168, and aspartate 211.

The protein belongs to the FtsZ family. Homodimer. Polymerizes to form a dynamic ring structure in a strictly GTP-dependent manner. Interacts directly with several other division proteins.

Its subcellular location is the cytoplasm. Essential cell division protein that forms a contractile ring structure (Z ring) at the future cell division site. The regulation of the ring assembly controls the timing and the location of cell division. One of the functions of the FtsZ ring is to recruit other cell division proteins to the septum to produce a new cell wall between the dividing cells. Binds GTP and shows GTPase activity. This is Cell division protein FtsZ 2 from Methanocaldococcus jannaschii (strain ATCC 43067 / DSM 2661 / JAL-1 / JCM 10045 / NBRC 100440) (Methanococcus jannaschii).